Reading from the N-terminus, the 354-residue chain is Uroporphyrinogen decarboxylase (354 aa).

Substrate is bound by residues 27 to 31 (RQAGR), aspartate 77, tyrosine 154, threonine 209, and histidine 327.

It belongs to the uroporphyrinogen decarboxylase family. In terms of assembly, homodimer.

The protein resides in the cytoplasm. The catalysed reaction is uroporphyrinogen III + 4 H(+) = coproporphyrinogen III + 4 CO2. The protein operates within porphyrin-containing compound metabolism; protoporphyrin-IX biosynthesis; coproporphyrinogen-III from 5-aminolevulinate: step 4/4. Functionally, catalyzes the decarboxylation of four acetate groups of uroporphyrinogen-III to yield coproporphyrinogen-III. The polypeptide is Uroporphyrinogen decarboxylase (Mannheimia succiniciproducens (strain KCTC 0769BP / MBEL55E)).